A 258-amino-acid polypeptide reads, in one-letter code: F-box/SPRY domain-containing protein 1 (258 aa).

The 49-residue stretch at Thr6–Gln54 folds into the F-box domain. Residues Phe64–Leu256 enclose the B30.2/SPRY domain.

This sequence belongs to the FBXO45/Fsn family. In terms of assembly, component of an E3 ubiquitin ligase complex composed of hiw and Fsn.

It is found in the synapse. It functions in the pathway protein modification; protein ubiquitination. In terms of biological role, required in the presynaptic motoneuron to down-regulate the levels of wnd and restrain synaptic terminal growth at the neuromuscular junction (NMJ). This is F-box/SPRY domain-containing protein 1 from Culex quinquefasciatus (Southern house mosquito).